The following is a 243-amino-acid chain: NAD-dependent protein deacetylase (243 aa).

One can recognise a Deacetylase sirtuin-type domain in the interval 1-243 (MKHDLETLKH…VSVVKSLMTE (243 aa)). The NAD(+) site is built by Ala24, Phe35, Arg36, Gln105, Ile107, Asp108, and His123. Phe35 serves as a coordination point for nicotinamide. Positions 107 and 108 each coordinate nicotinamide. The Proton acceptor role is filled by His123. Zn(2+)-binding residues include Cys131, Cys134, Cys151, and Cys154. Positions 192, 193, 215, and 232 each coordinate NAD(+).

Belongs to the sirtuin family. Class U subfamily. The cofactor is Zn(2+).

The protein localises to the cytoplasm. The enzyme catalyses N(6)-acetyl-L-lysyl-[protein] + NAD(+) + H2O = 2''-O-acetyl-ADP-D-ribose + nicotinamide + L-lysyl-[protein]. In terms of biological role, NAD-dependent protein deacetylase which modulates the activities of several enzymes which are inactive in their acetylated form. This is NAD-dependent protein deacetylase from Staphylococcus aureus (strain NCTC 8325 / PS 47).